The following is a 680-amino-acid chain: Outer dense fiber protein 2 (680 aa).

The disordered stretch occupies residues 27–46; that stretch reads LPKPSATSSQKSHKRGMKGD. Phosphoserine is present on residues Ser68 and Ser69. Thr87 carries the phosphothreonine modification. Ser90 carries the post-translational modification Phosphoserine; by TSSK4. Ser101 and Ser104 each carry phosphoserine. Thr105 bears the Phosphothreonine mark. A phosphoserine mark is found at Ser110 and Ser124. Residue Lys133 forms a Glycyl lysine isopeptide (Lys-Gly) (interchain with G-Cter in SUMO2) linkage. At Ser134 the chain carries Phosphoserine. Residues 139 to 212 are a coiled coil; sequence QKGERQMAKR…MSKLVEAEMD (74 aa). A Phosphothreonine modification is found at Thr226. Phosphoserine is present on Ser256. Coiled coils occupy residues 275-418 and 456-630; these read KEDS…AEQL and EIIV…SDLR. The tract at residues 387–410 is disordered; that stretch reads KQKGDRDKESLKKAIRAQKERAEK. A Phosphoserine modification is found at Ser627. The disordered stretch occupies residues 632 to 680; the sequence is RETGGDQCPEYRVPTGDCQEGGGNPPVPAAARGENTGMWDPGKAVGERH.

It belongs to the ODF2 family. As to quaternary structure, self-associates. Associates with microtubules and forms a fibrillar structure partially linked to the microtubule network. Interacts via its C-terminus with PLK1. Interacts with ODF1. Interacts with MARK4; the interaction is required for localization of ODF2 to centrioles. Interacts with TSSK4. Interacts with AKNA. Interacts with QRICH2. Interacts with CFAP58. Interacts with BBOF1. Interacts with CCDC38. Interacts with CCDC42. Tyrosine phosphorylated. Phosphorylated on Ser-90 by TSSK4.

It localises to the cytoplasm. It is found in the cytoskeleton. Its subcellular location is the microtubule organizing center. The protein resides in the centrosome. The protein localises to the cell projection. It localises to the cilium. It is found in the centriole. Its subcellular location is the spindle pole. The protein resides in the flagellum. Seems to be a major component of sperm tail outer dense fibers (ODF). ODFs are filamentous structures located on the outside of the axoneme in the midpiece and principal piece of the mammalian sperm tail and may help to maintain the passive elastic structures and elastic recoil of the sperm tail. May have a modulating influence on sperm motility. Functions as a general scaffold protein that is specifically localized at the distal/subdistal appendages of mother centrioles. Component of the centrosome matrix required for the localization of PLK1 and NIN to the centrosomes. Required for the formation and/or maintenance of normal CETN1 assembly. The polypeptide is Outer dense fiber protein 2 (ODF2) (Pongo abelii (Sumatran orangutan)).